An 829-amino-acid chain; its full sequence is Leucine--tRNA ligase (829 aa).

The 'HIGH' region signature appears at 42–52 (PYPSGNLHMGH). A 'KMSKS' region motif is present at residues 582–586 (KMSKS). Lysine 585 is an ATP binding site.

This sequence belongs to the class-I aminoacyl-tRNA synthetase family.

Its subcellular location is the cytoplasm. It carries out the reaction tRNA(Leu) + L-leucine + ATP = L-leucyl-tRNA(Leu) + AMP + diphosphate. In Moorella thermoacetica (strain ATCC 39073 / JCM 9320), this protein is Leucine--tRNA ligase.